Consider the following 281-residue polypeptide: Digeranylgeranylglyceryl phosphate synthase (281 aa).

7 helical membrane passes run 14–34 (AMAAFAGLIGVLIAYNILSSA), 38–58 (VSLSLFDTSLIFAIVFLVTGA), 95–115 (LFLFITGITLAFLVNPLCGII), 149–169 (FLFGGAVFGMAGLQALVVLFL), 207–227 (ASYIAAAFGFTAMLASPVPYL), 235–255 (YLFVVAIADIFFLIAVYQILG), and 259–279 (AARSSKLFKFAMLFALISFIV).

It belongs to the UbiA prenyltransferase family. DGGGP synthase subfamily. Mg(2+) is required as a cofactor.

It localises to the cell membrane. The enzyme catalyses sn-3-O-(geranylgeranyl)glycerol 1-phosphate + (2E,6E,10E)-geranylgeranyl diphosphate = 2,3-bis-O-(geranylgeranyl)-sn-glycerol 1-phosphate + diphosphate. It participates in membrane lipid metabolism; glycerophospholipid metabolism. Functionally, prenyltransferase that catalyzes the transfer of the geranylgeranyl moiety of geranylgeranyl diphosphate (GGPP) to the C2 hydroxyl of (S)-3-O-geranylgeranylglyceryl phosphate (GGGP). This reaction is the second ether-bond-formation step in the biosynthesis of archaeal membrane lipids. This Methanococcoides burtonii (strain DSM 6242 / NBRC 107633 / OCM 468 / ACE-M) protein is Digeranylgeranylglyceryl phosphate synthase.